The chain runs to 472 residues: Poly(A) polymerase catalytic subunit (472 aa).

Catalysis depends on residues Asp-194 and Asp-196.

This sequence belongs to the poxviridae poly(A) polymerase catalytic subunit family. In terms of assembly, heterodimer of a large (catalytic) subunit and a small (regulatory) subunit.

The enzyme catalyses RNA(n) + ATP = RNA(n)-3'-adenine ribonucleotide + diphosphate. In terms of biological role, polymerase that creates the 3'-poly(A) tail of mRNA's. The sequence is that of Poly(A) polymerase catalytic subunit (PAPL) from Fowlpox virus (strain NVSL) (FPV).